The chain runs to 302 residues: NAD kinase 2 (302 aa).

Asp78 acts as the Proton acceptor in catalysis. NAD(+)-binding positions include 78–79 (DG), 152–153 (NE), Asp182, and 193–198 (TAYSLS).

This sequence belongs to the NAD kinase family. A divalent metal cation is required as a cofactor.

Its subcellular location is the cytoplasm. It carries out the reaction NAD(+) + ATP = ADP + NADP(+) + H(+). Functionally, involved in the regulation of the intracellular balance of NAD and NADP, and is a key enzyme in the biosynthesis of NADP. Catalyzes specifically the phosphorylation on 2'-hydroxyl of the adenosine moiety of NAD to yield NADP. The polypeptide is NAD kinase 2 (Prochlorococcus marinus (strain NATL2A)).